Reading from the N-terminus, the 102-residue chain is Integration host factor subunit beta (102 aa).

The interval 54 to 102 is disordered; it reads HHRPARMGRNPKTGEPVALPAKYVPHFKPGKELRERVNSSRHQAPLRSQ. The span at 82-91 shows a compositional bias: basic and acidic residues; that stretch reads PGKELRERVN. Residues 93–102 show a composition bias toward polar residues; that stretch reads SRHQAPLRSQ.

This sequence belongs to the bacterial histone-like protein family. In terms of assembly, heterodimer of an alpha and a beta chain.

Its function is as follows. This protein is one of the two subunits of integration host factor, a specific DNA-binding protein that functions in genetic recombination as well as in transcriptional and translational control. The sequence is that of Integration host factor subunit beta from Halorhodospira halophila (strain DSM 244 / SL1) (Ectothiorhodospira halophila (strain DSM 244 / SL1)).